The sequence spans 278 residues: Cytidine kinase (278 aa).

203–208 (TRGEKG) provides a ligand contact to ATP. Catalysis depends on aspartate 237, which acts as the Proton acceptor.

This sequence belongs to the carbohydrate kinase PfkB family. It depends on Mg(2+) as a cofactor.

The catalysed reaction is cytidine + ATP = CMP + ADP + H(+). Involved in nucleoside degradation. Phosphorylates cytidine to CMP. Can also act on deoxycytidine and uridine, but is most active with cytidine. ATP is the most preferred phosphate donor, but it can also use GTP, CTP or UTP. The chain is Cytidine kinase from Thermococcus kodakarensis (strain ATCC BAA-918 / JCM 12380 / KOD1) (Pyrococcus kodakaraensis (strain KOD1)).